Reading from the N-terminus, the 329-residue chain is Apolipoprotein E (329 aa).

An N-terminal signal peptide occupies residues 1 to 18; it reads MKVLWAALVVALLAGCWA. Repeat copies occupy residues 92-113, 114-135, 136-157, 158-179, 180-201, 202-223, 224-245, and 246-267. The tract at residues 92 to 267 is 8 X 22 AA approximate tandem repeats; sequence TLMEETMKEI…HLDEVREQME (176 aa). Methionine 155 carries the methionine sulfoxide modification. Serine 159 bears the Phosphoserine mark. Positions 170–180 are LDL and other lipoprotein receptors binding; that stretch reads HMRKLRKRVLR. Heparin is bound at residue 174-177; that stretch reads LRKR. Residues 222-302 are lipid-binding and lipoprotein association; it reads HAKVDALATQ…GWFEPLVEDM (81 aa). 241–248 provides a ligand contact to heparin; the sequence is GQQLRGRL. A homooligomerization region spans residues 278-329; sequence NQMRQQAEPFQARLKGWFEPLVEDMQRQWAVLVEKVQAAVGTSPTTPPVETK. The tract at residues 290–302 is specificity for association with VLDL; the sequence is RLKGWFEPLVEDM.

It belongs to the apolipoprotein A1/A4/E family. In terms of assembly, homotetramer. May interact with ABCA1; functionally associated with ABCA1 in the biogenesis of HDLs. May interact with APP/A4 amyloid-beta peptide; the interaction is extremely stable in vitro but its physiological significance is unclear. May interact with MAPT. May interact with MAP2. In the cerebrospinal fluid, interacts with secreted SORL1. Interacts with PMEL; this allows the loading of PMEL luminal fragment on ILVs to induce fibril nucleation. In terms of processing, APOE exists as multiple glycosylated and sialylated glycoforms within cells and in plasma. The extent of glycosylation and sialylation are tissue and context specific. Post-translationally, glycated in plasma VLDL. Phosphorylated by FAM20C in the extracellular medium.

The protein localises to the secreted. It localises to the extracellular space. The protein resides in the extracellular matrix. It is found in the extracellular vesicle. Its subcellular location is the endosome. The protein localises to the multivesicular body. Its function is as follows. APOE is an apolipoprotein, a protein associating with lipid particles, that mainly functions in lipoprotein-mediated lipid transport between organs via the plasma and interstitial fluids. APOE is a core component of plasma lipoproteins and is involved in their production, conversion and clearance. Apolipoproteins are amphipathic molecules that interact both with lipids of the lipoprotein particle core and the aqueous environment of the plasma. As such, APOE associates with chylomicrons, chylomicron remnants, very low density lipoproteins (VLDL) and intermediate density lipoproteins (IDL) but shows a preferential binding to high-density lipoproteins (HDL). It also binds a wide range of cellular receptors including the LDL receptor/LDLR, the LDL receptor-related proteins LRP1, LRP2 and LRP8 and the very low-density lipoprotein receptor/VLDLR that mediate the cellular uptake of the APOE-containing lipoprotein particles. Finally, APOE also has a heparin-binding activity and binds heparan-sulfate proteoglycans on the surface of cells, a property that supports the capture and the receptor-mediated uptake of APOE-containing lipoproteins by cells. A main function of APOE is to mediate lipoprotein clearance through the uptake of chylomicrons, VLDLs, and HDLs by hepatocytes. APOE is also involved in the biosynthesis by the liver of VLDLs as well as their uptake by peripheral tissues ensuring the delivery of triglycerides and energy storage in muscle, heart and adipose tissues. By participating in the lipoprotein-mediated distribution of lipids among tissues, APOE plays a critical role in plasma and tissues lipid homeostasis. APOE is also involved in two steps of reverse cholesterol transport, the HDLs-mediated transport of cholesterol from peripheral tissues to the liver, and thereby plays an important role in cholesterol homeostasis. First, it is functionally associated with ABCA1 in the biogenesis of HDLs in tissues. Second, it is enriched in circulating HDLs and mediates their uptake by hepatocytes. APOE also plays an important role in lipid transport in the central nervous system, regulating neuron survival and sprouting. The chain is Apolipoprotein E (APOE) from Arctocephalus gazella (Antarctic fur seal).